Here is an 85-residue protein sequence, read N- to C-terminus: Beta-insect depressant toxin Lqh-dprIT3h (85 aa).

Residues 1-21 (MKLLLLLTISASMLIEGLVNA) form the signal peptide. Positions 22-82 (DGYIRGGDGC…EWDYETDTCG (61 aa)) constitute an LCN-type CS-alpha/beta domain. 4 disulfides stabilise this stretch: Cys-31–Cys-81, Cys-35–Cys-56, Cys-42–Cys-63, and Cys-46–Cys-65. Glycine amide is present on Gly-82.

The protein belongs to the long (4 C-C) scorpion toxin superfamily. Sodium channel inhibitor family. Beta subfamily. In terms of tissue distribution, expressed by the venom gland.

The protein localises to the secreted. Its function is as follows. Depressant insect beta-toxins cause a transient contraction paralysis followed by a slow flaccid paralysis. They bind voltage-independently at site-4 of sodium channels (Nav) and block action potentials, primarily by depolarizing the axonal membrane and suppressing the sodium current. This depressant toxin is active only on insects. It is found in a relatively small amount in the venom. In Leiurus hebraeus (Hebrew deathstalker scorpion), this protein is Beta-insect depressant toxin Lqh-dprIT3h.